Consider the following 163-residue polypeptide: ATP synthase subunit b (163 aa).

Residues methionine 1–leucine 21 traverse the membrane as a helical segment.

This sequence belongs to the ATPase B chain family. In terms of assembly, F-type ATPases have 2 components, F(1) - the catalytic core - and F(0) - the membrane proton channel. F(1) has five subunits: alpha(3), beta(3), gamma(1), delta(1), epsilon(1). F(0) has three main subunits: a(1), b(2) and c(10-14). The alpha and beta chains form an alternating ring which encloses part of the gamma chain. F(1) is attached to F(0) by a central stalk formed by the gamma and epsilon chains, while a peripheral stalk is formed by the delta and b chains.

Its subcellular location is the cell inner membrane. In terms of biological role, f(1)F(0) ATP synthase produces ATP from ADP in the presence of a proton or sodium gradient. F-type ATPases consist of two structural domains, F(1) containing the extramembraneous catalytic core and F(0) containing the membrane proton channel, linked together by a central stalk and a peripheral stalk. During catalysis, ATP synthesis in the catalytic domain of F(1) is coupled via a rotary mechanism of the central stalk subunits to proton translocation. Component of the F(0) channel, it forms part of the peripheral stalk, linking F(1) to F(0). The chain is ATP synthase subunit b from Petrotoga mobilis (strain DSM 10674 / SJ95).